We begin with the raw amino-acid sequence, 800 residues long: Serine/threonine-protein kinase KIN4 (800 aa).

In terms of domain architecture, Protein kinase spans 46–313 (YIIGSTLGEG…LQTIKRHVWL (268 aa)). Residues 52-60 (LGEGEFGKV) and lysine 80 each bind ATP. Catalysis depends on aspartate 175, which acts as the Proton acceptor. Disordered regions lie at residues 331-397 (LQKE…GSKV) and 438-487 (SARH…TSFT). Over residues 348-358 (STYSSSASSYS) the composition is skewed to low complexity. Phosphoserine is present on residues serine 365 and serine 388. Composition is skewed to polar residues over residues 380–395 (QLAT…STGS) and 459–473 (GSPT…PSSK). Serine 521 carries the post-translational modification Phosphoserine. Disordered stretches follow at residues 629 to 661 (EPTN…DKDS) and 678 to 754 (SLNG…PGRS). Positions 678 to 721 (SLNGSRSTVESRTSKGNAPPVSSRNPSGQSNRSNIKITQQQPRN) are enriched in polar residues. The segment covering 727–740 (PNPDKKINDNRIRD) has biased composition (basic and acidic residues). Residue serine 748 is modified to Phosphoserine.

The protein belongs to the protein kinase superfamily. Ser/Thr protein kinase family.

The enzyme catalyses L-seryl-[protein] + ATP = O-phospho-L-seryl-[protein] + ADP + H(+). The catalysed reaction is L-threonyl-[protein] + ATP = O-phospho-L-threonyl-[protein] + ADP + H(+). This protein is probably a serine/threonine protein kinase. The sequence is that of Serine/threonine-protein kinase KIN4 (KIN4) from Saccharomyces cerevisiae (strain ATCC 204508 / S288c) (Baker's yeast).